A 249-amino-acid polypeptide reads, in one-letter code: DNA polymerase sliding clamp 3 (249 aa).

This sequence belongs to the PCNA family. In terms of assembly, homotrimer. The subunits circularize to form a toroid; DNA passes through its center. Replication factor C (RFC) is required to load the toroid on the DNA.

Sliding clamp subunit that acts as a moving platform for DNA processing. Responsible for tethering the catalytic subunit of DNA polymerase and other proteins to DNA during high-speed replication. In Aeropyrum pernix (strain ATCC 700893 / DSM 11879 / JCM 9820 / NBRC 100138 / K1), this protein is DNA polymerase sliding clamp 3.